Reading from the N-terminus, the 549-residue chain is MSTAANEPSRSRGKAPAGERVADWADGRLGIYSLAKANMRKIFPDHWSFMLGEVCLYSFIIIILTGVYLTLFFHPSMAEVEYHGSYVPLQGQMMSEAYASTLDISFDVRGGLLIRQIHHWAALIFLAGMFVHMMRVFFTGAFRKPREVNWLFGFLLLVLGMFTGFTGYSLPDDLLSGTGIRFMEGAILSVPIVGTYISFFLFGGEFPGHDFVSRFYSIHILLLPGIMLGLLVGHLILVFYHKHTQFAGPGKTNKNVVGMPLLPVYTAKAGGFFFLVFGVISVVSAIATINPIWPSGPTGPTRSPPAPSRLVLGFSEGLIRVMPGWEINAWGHTLVLGVFVPLLIFPLVLAAIAVYPFIESWVTGYKREHYILDRPLLDRPRNAPTRTAFGVAWLTVYFVLLIGGGNDLWATHFHLSINAITWFVRIAFFVGPVVAFIATKRICLGLQRRDKDKVLHGRESAIIKRLPHGEFIEVHEPISQEQLHTLTAHEQYKPAEIGPTVDENGVERKVSGTQKLRAKLSESYYGEESQIPKPTVEEYKEITSGHGHH.

Residues 54 to 74 (VCLYSFIIIILTGVYLTLFFH) form a helical membrane-spanning segment. The heme site is built by histidine 118 and histidine 132. Transmembrane regions (helical) follow at residues 122 to 142 (ALIF…TGAF), 150 to 170 (WLFG…GYSL), and 182 to 202 (FMEG…FFLF). Residues histidine 219 and histidine 234 each contribute to the heme site. The next 5 helical transmembrane spans lie at 220-240 (ILLL…LVFY), 269-289 (AGGF…IATI), 334-354 (LVLG…AIAV), 389-409 (FGVA…NDLW), and 417-437 (INAI…VAFI).

This sequence belongs to the cytochrome b family. As to quaternary structure, the cytochrome bc1 complex is composed of a cytochrome b (QcrB), the Rieske iron-sulfur protein (QcrA) and a diheme cytochrome c (QcrC) subunit. Heme is required as a cofactor.

It localises to the cell membrane. It catalyses the reaction a quinol + 2 Fe(III)-[cytochrome c](out) = a quinone + 2 Fe(II)-[cytochrome c](out) + 2 H(+)(out). Functionally, cytochrome b subunit of the cytochrome bc1 complex, an essential component of the respiratory electron transport chain required for ATP synthesis. The bc1 complex catalyzes the oxidation of ubiquinol and the reduction of cytochrome c in the respiratory chain. The bc1 complex operates through a Q-cycle mechanism that couples electron transfer to generation of the proton gradient that drives ATP synthesis. The cytochrome b subunit contains two ubiquinol reactive sites: the oxidation (QP) site and the reduction (QN) site. The polypeptide is Cytochrome bc1 complex cytochrome b subunit (qcrB) (Streptomyces lividans).